We begin with the raw amino-acid sequence, 344 residues long: GTP 3',8-cyclase (344 aa).

The Radical SAM core domain maps to 19 to 245; sequence PFGRAVTYLR…DIPYRTGGPA (227 aa). Arginine 28 contacts GTP. [4Fe-4S] cluster-binding residues include cysteine 35 and cysteine 39. Tyrosine 41 serves as a coordination point for S-adenosyl-L-methionine. Cysteine 42 serves as a coordination point for [4Fe-4S] cluster. A GTP-binding site is contributed by arginine 77. Residue glycine 81 coordinates S-adenosyl-L-methionine. Threonine 111 contributes to the GTP binding site. Serine 135 provides a ligand contact to S-adenosyl-L-methionine. Lysine 171 is a GTP binding site. S-adenosyl-L-methionine is bound at residue methionine 205. Cysteine 268 and cysteine 271 together coordinate [4Fe-4S] cluster. 273-275 contributes to the GTP binding site; that stretch reads RVR. A [4Fe-4S] cluster-binding site is contributed by cysteine 285.

It belongs to the radical SAM superfamily. MoaA family. In terms of assembly, monomer and homodimer. [4Fe-4S] cluster serves as cofactor.

The catalysed reaction is GTP + AH2 + S-adenosyl-L-methionine = (8S)-3',8-cyclo-7,8-dihydroguanosine 5'-triphosphate + 5'-deoxyadenosine + L-methionine + A + H(+). Its pathway is cofactor biosynthesis; molybdopterin biosynthesis. Its function is as follows. Catalyzes the cyclization of GTP to (8S)-3',8-cyclo-7,8-dihydroguanosine 5'-triphosphate. In Brucella ovis (strain ATCC 25840 / 63/290 / NCTC 10512), this protein is GTP 3',8-cyclase.